The chain runs to 293 residues: Homoserine kinase (293 aa).

83 to 93 (RPKSGLGSSGA) provides a ligand contact to ATP.

It belongs to the GHMP kinase family. Homoserine kinase subfamily.

The protein localises to the cytoplasm. It catalyses the reaction L-homoserine + ATP = O-phospho-L-homoserine + ADP + H(+). The protein operates within amino-acid biosynthesis; L-threonine biosynthesis; L-threonine from L-aspartate: step 4/5. Functionally, catalyzes the ATP-dependent phosphorylation of L-homoserine to L-homoserine phosphate. In Pyrococcus horikoshii (strain ATCC 700860 / DSM 12428 / JCM 9974 / NBRC 100139 / OT-3), this protein is Homoserine kinase.